The primary structure comprises 360 residues: 3-dehydroquinate synthase (360 aa).

NAD(+)-binding positions include 69 to 74 (DGEKYK), 103 to 107 (GVVGD), 127 to 128 (TT), Lys-140, Lys-149, and 167 to 170 (TLDT). Zn(2+) is bound by residues Glu-182, His-246, and His-263.

Belongs to the sugar phosphate cyclases superfamily. Dehydroquinate synthase family. Requires Co(2+) as cofactor. It depends on Zn(2+) as a cofactor. NAD(+) is required as a cofactor.

The protein localises to the cytoplasm. It catalyses the reaction 7-phospho-2-dehydro-3-deoxy-D-arabino-heptonate = 3-dehydroquinate + phosphate. The protein operates within metabolic intermediate biosynthesis; chorismate biosynthesis; chorismate from D-erythrose 4-phosphate and phosphoenolpyruvate: step 2/7. In terms of biological role, catalyzes the conversion of 3-deoxy-D-arabino-heptulosonate 7-phosphate (DAHP) to dehydroquinate (DHQ). In Vesicomyosocius okutanii subsp. Calyptogena okutanii (strain HA), this protein is 3-dehydroquinate synthase.